A 243-amino-acid polypeptide reads, in one-letter code: Geranylgeranylglyceryl phosphate synthase (243 aa).

Residues D22 and S51 each coordinate Mg(2+). Residues 170–176 (YLESGSG), 201–202 (GG), and 223–224 (GT) each bind sn-glycerol 1-phosphate.

This sequence belongs to the GGGP/HepGP synthase family. Group II subfamily. The cofactor is Mg(2+).

The protein localises to the cytoplasm. It carries out the reaction sn-glycerol 1-phosphate + (2E,6E,10E)-geranylgeranyl diphosphate = sn-3-O-(geranylgeranyl)glycerol 1-phosphate + diphosphate. Its pathway is membrane lipid metabolism; glycerophospholipid metabolism. Functionally, prenyltransferase that catalyzes the transfer of the geranylgeranyl moiety of geranylgeranyl diphosphate (GGPP) to the C3 hydroxyl of sn-glycerol-1-phosphate (G1P). This reaction is the first ether-bond-formation step in the biosynthesis of archaeal membrane lipids. In Picrophilus torridus (strain ATCC 700027 / DSM 9790 / JCM 10055 / NBRC 100828 / KAW 2/3), this protein is Geranylgeranylglyceryl phosphate synthase.